A 351-amino-acid chain; its full sequence is Nicotinate-nucleotide--dimethylbenzimidazole phosphoribosyltransferase (351 aa).

The active-site Proton acceptor is the E313.

It belongs to the CobT family.

It carries out the reaction 5,6-dimethylbenzimidazole + nicotinate beta-D-ribonucleotide = alpha-ribazole 5'-phosphate + nicotinate + H(+). Its pathway is nucleoside biosynthesis; alpha-ribazole biosynthesis; alpha-ribazole from 5,6-dimethylbenzimidazole: step 1/2. Its function is as follows. Catalyzes the synthesis of alpha-ribazole-5'-phosphate from nicotinate mononucleotide (NAMN) and 5,6-dimethylbenzimidazole (DMB). The protein is Nicotinate-nucleotide--dimethylbenzimidazole phosphoribosyltransferase of Mycobacterium leprae (strain Br4923).